The sequence spans 152 residues: Putative NrdI-like protein (152 aa).

Belongs to the NrdI family.

The sequence is that of Putative NrdI-like protein from Streptococcus pyogenes serotype M18 (strain MGAS8232).